Consider the following 435-residue polypeptide: MLDSKLLRTELDETAEKLARRGFKLDVETLRNLEEQRKSLQVKTEELQAQRNSRSKSIGQAKAKGDHEEADRIMADVANLGSELDEAKAALAELQQQIEDIALSVPNIPDDSVPLGKDENENVEVLRWGTPLAYDFEVKDHVDLGEMADGLDFASAVKISGSRFIVMKGQFARLHRALSQFMLDLHTEEHGYTEMYVPYLVNPDSLFGTGQLPKFGEDLFHTSPLTEQVSDVPLKKLSLIPTAEVPVTNMVRDTITDEADMPLKMTAHTPCFRSEAGSYGRDTRGLIRMHQFDKVELVQITKPEDSMAALEELTGHAEKVLQLLELPYRKVVLCTGDMGFGSRKTYDLEVWVPAQETYREISSCSNMWDFQARRMQARFRRKGEKKPELVHTLNGSGLAVGRTMVAILENFQQADGKIAIPQVLRKYMNGVEFIG.

The interval 41–70 (QVKTEELQAQRNSRSKSIGQAKAKGDHEEA) is disordered. Polar residues predominate over residues 49–58 (AQRNSRSKSI). 242 to 244 (TAE) lines the L-serine pocket. 273-275 (RSE) contacts ATP. Position 296 (E296) interacts with L-serine. Position 360–363 (360–363 (EISS)) interacts with ATP. S396 contacts L-serine.

The protein belongs to the class-II aminoacyl-tRNA synthetase family. Type-1 seryl-tRNA synthetase subfamily. In terms of assembly, homodimer. The tRNA molecule binds across the dimer.

It is found in the cytoplasm. It carries out the reaction tRNA(Ser) + L-serine + ATP = L-seryl-tRNA(Ser) + AMP + diphosphate + H(+). The enzyme catalyses tRNA(Sec) + L-serine + ATP = L-seryl-tRNA(Sec) + AMP + diphosphate + H(+). The protein operates within aminoacyl-tRNA biosynthesis; selenocysteinyl-tRNA(Sec) biosynthesis; L-seryl-tRNA(Sec) from L-serine and tRNA(Sec): step 1/1. In terms of biological role, catalyzes the attachment of serine to tRNA(Ser). Is also able to aminoacylate tRNA(Sec) with serine, to form the misacylated tRNA L-seryl-tRNA(Sec), which will be further converted into selenocysteinyl-tRNA(Sec). The polypeptide is Serine--tRNA ligase (Aliivibrio fischeri (strain ATCC 700601 / ES114) (Vibrio fischeri)).